The chain runs to 536 residues: Membrane protein insertase YidC (536 aa).

Residues 14 to 34 (ILIATAISLLFFIPYSYFFAP) form a helical membrane-spanning segment. The disordered stretch occupies residues 43-69 (STSMERAEQQAAPQTSSSPKEGQVSSV). The segment covering 53–68 (AAPQTSSSPKEGQVSS) has biased composition (polar residues). The next 5 membrane-spanning stretches (helical) occupy residues 312-332 (VVEYGFITFFAKPLFLLLDWL), 339-359 (WGWAIVLLTLVVRIILFPLTY), 401-421 (GANPMGGCLPLLLQMPIFFAI), 436-456 (WILWINDLSVMDPYFILPILM), and 484-504 (PLIFTFFFVTFPSGLVLYWFV).

The protein belongs to the OXA1/ALB3/YidC family. Type 1 subfamily. Interacts with the Sec translocase complex via SecD. Specifically interacts with transmembrane segments of nascent integral membrane proteins during membrane integration.

The protein localises to the cell inner membrane. Its function is as follows. Required for the insertion and/or proper folding and/or complex formation of integral membrane proteins into the membrane. Involved in integration of membrane proteins that insert both dependently and independently of the Sec translocase complex, as well as at least some lipoproteins. Aids folding of multispanning membrane proteins. The protein is Membrane protein insertase YidC of Wolinella succinogenes (strain ATCC 29543 / DSM 1740 / CCUG 13145 / JCM 31913 / LMG 7466 / NCTC 11488 / FDC 602W) (Vibrio succinogenes).